We begin with the raw amino-acid sequence, 312 residues long: Olfactory receptor 2L2 (312 aa).

The Extracellular portion of the chain corresponds to M1–L24. N5 is a glycosylation site (N-linked (GlcNAc...) asparagine). Residues F25–I48 traverse the membrane as a helical segment. At F49–T56 the chain is on the cytoplasmic side. A helical membrane pass occupies residues P57 to P78. At K79 to Q99 the chain is on the extracellular side. An N-linked (GlcNAc...) asparagine glycan is attached at N88. A disulfide bridge links C96 with C188. The chain crosses the membrane as a helical span at residues S100–Y119. Residues D120–R138 lie on the Cytoplasmic side of the membrane. A helical transmembrane segment spans residues V139 to A157. Topologically, residues H158–Y194 are extracellular. A helical transmembrane segment spans residues E195 to G218. The Cytoplasmic portion of the chain corresponds to R219–K235. Residues A236–Y258 traverse the membrane as a helical segment. The Extracellular segment spans residues V259–K271. A helical membrane pass occupies residues I272–L291. The Cytoplasmic segment spans residues R292–M312.

Belongs to the G-protein coupled receptor 1 family.

It localises to the cell membrane. Its function is as follows. Odorant receptor. In Homo sapiens (Human), this protein is Olfactory receptor 2L2 (OR2L2).